The sequence spans 386 residues: Putative 8-amino-7-oxononanoate synthase (386 aa).

Arg26 contributes to the substrate binding site. 113–114 (GY) provides a ligand contact to pyridoxal 5'-phosphate. His138 provides a ligand contact to substrate. Pyridoxal 5'-phosphate contacts are provided by residues Ser186, 211-214 (DDAH), and 240-243 (TLSK). Lys243 bears the N6-(pyridoxal phosphate)lysine mark. Thr352 contributes to the substrate binding site.

It belongs to the class-II pyridoxal-phosphate-dependent aminotransferase family. BioF subfamily. In terms of assembly, homodimer. Pyridoxal 5'-phosphate serves as cofactor.

The catalysed reaction is 6-carboxyhexanoyl-[ACP] + L-alanine + H(+) = (8S)-8-amino-7-oxononanoate + holo-[ACP] + CO2. It participates in cofactor biosynthesis; biotin biosynthesis. Catalyzes the decarboxylative condensation of pimeloyl-[acyl-carrier protein] and L-alanine to produce 8-amino-7-oxononanoate (AON), [acyl-carrier protein], and carbon dioxide. This Phenylobacterium zucineum (strain HLK1) protein is Putative 8-amino-7-oxononanoate synthase (bioF).